The primary structure comprises 333 residues: uncharacterized protein (333 aa).

The signal sequence occupies residues 1–16 (MRPFLMILSVTYIASA). Residue Asn204 is glycosylated (N-linked (GlcNAc...) asparagine).

This is an uncharacterized protein from Encephalitozoon cuniculi (strain GB-M1) (Microsporidian parasite).